Here is a 540-residue protein sequence, read N- to C-terminus: Chaperonin GroEL (540 aa).

Residues 29 to 32 (TLGP), 86 to 90 (DGTTT), G413, 476 to 478 (NAA), and D492 each bind ATP.

Belongs to the chaperonin (HSP60) family. As to quaternary structure, forms a cylinder of 14 subunits composed of two heptameric rings stacked back-to-back. Interacts with the co-chaperonin GroES.

It is found in the cytoplasm. It carries out the reaction ATP + H2O + a folded polypeptide = ADP + phosphate + an unfolded polypeptide.. In terms of biological role, together with its co-chaperonin GroES, plays an essential role in assisting protein folding. The GroEL-GroES system forms a nano-cage that allows encapsulation of the non-native substrate proteins and provides a physical environment optimized to promote and accelerate protein folding. This is Chaperonin GroEL from Streptococcus gordonii (strain Challis / ATCC 35105 / BCRC 15272 / CH1 / DL1 / V288).